A 454-amino-acid polypeptide reads, in one-letter code: tRNA modification GTPase MnmE (454 aa).

(6S)-5-formyl-5,6,7,8-tetrahydrofolate-binding residues include R23, E80, and K120. In terms of domain architecture, TrmE-type G spans 216–377 (GMKVVIAGRP…LRNHLKQSMG (162 aa)). K(+) is bound at residue N226. Residues 226 to 231 (NAGKSS), 245 to 251 (TDIAGTT), 270 to 273 (DTAG), 335 to 338 (NKAD), and 358 to 360 (SAR) contribute to the GTP site. S230 contributes to the Mg(2+) binding site. Residues T245, I247, and T250 each contribute to the K(+) site. T251 contacts Mg(2+). K454 contacts (6S)-5-formyl-5,6,7,8-tetrahydrofolate.

It belongs to the TRAFAC class TrmE-Era-EngA-EngB-Septin-like GTPase superfamily. TrmE GTPase family. In terms of assembly, homodimer. Heterotetramer of two MnmE and two MnmG subunits. The cofactor is K(+).

The protein localises to the cytoplasm. Functionally, exhibits a very high intrinsic GTPase hydrolysis rate. Involved in the addition of a carboxymethylaminomethyl (cmnm) group at the wobble position (U34) of certain tRNAs, forming tRNA-cmnm(5)s(2)U34. The protein is tRNA modification GTPase MnmE of Salmonella arizonae (strain ATCC BAA-731 / CDC346-86 / RSK2980).